The chain runs to 662 residues: Glycogen debranching enzyme (662 aa).

The active-site Nucleophile is Asp338. Glu373 functions as the Proton donor in the catalytic mechanism.

It belongs to the glycosyl hydrolase 13 family.

The catalysed reaction is Hydrolysis of (1-&gt;6)-alpha-D-glucosidic linkages to branches with degrees of polymerization of three or four glucose residues in limit dextrin.. The protein operates within glycan degradation; glycogen degradation. Its function is as follows. Removes maltotriose and maltotetraose chains that are attached by 1,6-alpha-linkage to the limit dextrin main chain, generating a debranched limit dextrin. This Yersinia enterocolitica serotype O:8 / biotype 1B (strain NCTC 13174 / 8081) protein is Glycogen debranching enzyme.